A 231-amino-acid polypeptide reads, in one-letter code: Large ribosomal subunit protein uL1 (231 aa).

This sequence belongs to the universal ribosomal protein uL1 family. In terms of assembly, part of the 50S ribosomal subunit.

Its function is as follows. Binds directly to 23S rRNA. The L1 stalk is quite mobile in the ribosome, and is involved in E site tRNA release. In terms of biological role, protein L1 is also a translational repressor protein, it controls the translation of the L11 operon by binding to its mRNA. The polypeptide is Large ribosomal subunit protein uL1 (Buchnera aphidicola subsp. Acyrthosiphon pisum (strain 5A)).